The sequence spans 284 residues: D-tagatose-1,6-bisphosphate aldolase subunit GatY (284 aa).

D82 (proton donor) is an active-site residue. Zn(2+) contacts are provided by H83 and H180. G181 contacts dihydroxyacetone phosphate. H208 is a Zn(2+) binding site. Dihydroxyacetone phosphate contacts are provided by residues 209-211 (GAS) and 230-233 (NVAT).

The protein belongs to the class II fructose-bisphosphate aldolase family. TagBP aldolase GatY subfamily. In terms of assembly, forms a complex with GatZ. Zn(2+) is required as a cofactor.

The catalysed reaction is D-tagatofuranose 1,6-bisphosphate = D-glyceraldehyde 3-phosphate + dihydroxyacetone phosphate. It participates in carbohydrate metabolism; D-tagatose 6-phosphate degradation; D-glyceraldehyde 3-phosphate and glycerone phosphate from D-tagatose 6-phosphate: step 2/2. In terms of biological role, catalytic subunit of the tagatose-1,6-bisphosphate aldolase GatYZ, which catalyzes the reversible aldol condensation of dihydroxyacetone phosphate (DHAP or glycerone-phosphate) with glyceraldehyde 3-phosphate (G3P) to produce tagatose 1,6-bisphosphate (TBP). Requires GatZ subunit for full activity and stability. Is involved in the catabolism of galactitol. The polypeptide is D-tagatose-1,6-bisphosphate aldolase subunit GatY (Escherichia coli O17:K52:H18 (strain UMN026 / ExPEC)).